Here is a 195-residue protein sequence, read N- to C-terminus: Calcium channel flower (195 aa).

3 helical membrane passes run 34–54 (LLGIVAAFFAILFGLWNVISI), 66–88 (IIQMVAGFVVMLLEAPCCFVCIE), and 117–137 (IFMCFGLASLFGSGLIFATGV).

This sequence belongs to the calcium channel flower family. In terms of assembly, homomultimer. Associates with the dally/ magu complex.

The protein localises to the cell membrane. The protein resides in the cytoplasmic vesicle. It localises to the secretory vesicle. It is found in the synaptic vesicle membrane. Its subcellular location is the presynaptic cell membrane. The protein localises to the endosome. With respect to regulation, channel activity is inhibited by La(3+), which reduces Ca(2+) influx and thus inhibits it's function in promoting activity-dependent bulk endocytosis (ADBE) in response to high stimuli. Functionally, transmembrane protein which mediates synaptic endocytosis, fitness-based cell culling, neuronal culling, morphogen gradient scaling, and calcium transport. Regulates synaptic endocytosis and hence couples exo- with endocytosis. Controls two major modes of synaptic vesicle (SV) endocytosis in the synaptic boutons of neuromuscular junctions (NMJs); Ca(2+) channel-independent Clathrin-mediated endocytosis (CME) in response to mild stimulation, and Ca(2+) channel-dependent activity-dependent bulk endocytosis (ADBE) in response to strong stimulation. Functions in ADBE and subsequent SV reformation from bulk endosomes by initiating Ca(2+) channel-dependent phosphatidylinositol 4,5-bisphosphate (PtdIns(4,5)P2) compartmentalization in synaptic boutons. There it acts at the periactive zone to provide the low Ca(2+) levels required to initiate Calcineurin activation and upregulate PtdIns(4,5)P2. Conversely PtdIns(4,5)P2 enhances fwe Ca(2+) channel-activity, establishing a positive feedback loop that induces PtdIns(4,5)P2 microdomain at the periactive zone. These microdomains trigger bulk membrane invagination (i.e. ADBE) by triggering actin polymerization while also promoting localization of fwe to bulk endosomes, thereby removing the ADBE trigger to reduce endocytosis and prevent excess membrane uptake. PtdIns(4,5)P2 then promotes SV reformation from the bulk endosomes, to coordinate ADBE and subsequent SV reformation. Different combinations of the flower isoforms at the cell membrane are also required for the identification and elimination of suboptimal or supernumerary cells during development, regeneration, and adulthood. Required for the recognition and elimination of unfit cells in the developing wing during cell competition. In the developing pupal retina, mediates the elimination of unwanted postmitotic neurons, including supernumerary photoreceptor neurons that form at the periphery of the retina and are contained within incomplete ommatidia units. Also required for efficient elimination and replacement of old neurons by newly generated neurons during regeneration in the adult brain following mechanical injury. Downstream of the flower fitness fingerprints, cells identified as unwanted or unfit are eliminated via apoptosis through the expression of ahuizotl (azot). However, the cells marked for elimination by the flower isoforms only undergo apoptosis if additional thresholds are met; (1) their neighboring fit/healthy cells express different levels of the fwe isoforms, and (2) the levels of the protective signal SPARC expressed by the loser or unwanted cells are unable to inhibit caspase activation. These additional thresholds for flower-mediated apoptosis, allows useful cells to recover from transient and limited stress before they are unnecessarily eliminated. Functions with dally and magu in a mechanism of scaling, which utilises apoptosis to ensure that the dpp morphogen gradient, which mediates organ growth, remains proportional to the size of the growing wing. In this mechanism, fwe represses dally- and Magu-dependent activity in expanding the gradient, and dally/Magu inhibits fwe-dependent apoptosis to keep cell death rate low. When the levels of these different proteins are optimally regulated the gradient correctly scales with organ growth but when this fails, fwe-mediated apoptosis is activated to trim the developing tissue to match the correct size of the gradient. This chain is Calcium channel flower, found in Drosophila ananassae (Fruit fly).